The sequence spans 191 residues: Ferric nitrobindin-like protein (191 aa).

The GXWXGXG signature appears at 20–26 (GDWAGAG).

This sequence belongs to the nitrobindin family.

The protein is Ferric nitrobindin-like protein of Streptomyces coelicolor (strain ATCC BAA-471 / A3(2) / M145).